Reading from the N-terminus, the 880-residue chain is uncharacterized protein (880 aa).

10 disordered regions span residues 101 to 149, 191 to 224, 240 to 273, 294 to 350, 425 to 446, 470 to 508, 536 to 561, 580 to 613, 682 to 713, and 844 to 880; these read KPIP…LRSE, PETS…ISTH, TTTT…PILK, NSNS…STTS, QPDS…ESQP, STST…SSSS, MESS…NDNS, APQS…NDDE, NTNT…NINN, and NSSG…KSEI. Positions 113–147 form a coiled coil; that stretch reads ISIKEKEKEKEKEKEKEKEKEKEKEKEMKSTINLR. Over residues 115–149 the composition is skewed to basic and acidic residues; it reads IKEKEKEKEKEKEKEKEKEKEKEKEMKSTINLRSE. Composition is skewed to low complexity over residues 193-223 and 240-256; these read TSTP…SIST and TTTT…PSSS. Residues 257–271 are compositionally biased toward polar residues; it reads IAGITNPTSRSSSPI. Positions 294-332 are enriched in low complexity; it reads NSNSSSGGGNNNNKSISTPSSPIISRPITNKINNNNNNN. Residues 333–342 are compositionally biased toward polar residues; it reads QPQLHYNQPQ. Positions 536–548 are enriched in low complexity; it reads MESSTTTTLLSEN. Residues 589–613 are compositionally biased toward acidic residues; the sequence is QPEDDPFFDFEDLSDDDDSNDNDDE. Positions 844–864 are enriched in low complexity; sequence NSSGSGNNSNDNSGSSSPSSS. The span at 865-880 shows a compositional bias: polar residues; it reads KTNTLNQQSICIKSEI.

This is an uncharacterized protein from Dictyostelium discoideum (Social amoeba).